A 176-amino-acid chain; its full sequence is Co-chaperone protein HscB homolog (176 aa).

The 73-residue stretch at 8 to 80 (DFFALFGLPV…LRRATYLLKL (73 aa)) folds into the J domain.

Belongs to the HscB family. Interacts with HscA and stimulates its ATPase activity.

Its function is as follows. Co-chaperone involved in the maturation of iron-sulfur cluster-containing proteins. Seems to help targeting proteins to be folded toward HscA. This chain is Co-chaperone protein HscB homolog, found in Cupriavidus taiwanensis (strain DSM 17343 / BCRC 17206 / CCUG 44338 / CIP 107171 / LMG 19424 / R1) (Ralstonia taiwanensis (strain LMG 19424)).